Reading from the N-terminus, the 246-residue chain is Pyridoxine 5'-phosphate synthase (246 aa).

Residue asparagine 12 coordinates 3-amino-2-oxopropyl phosphate. 14-15 (DH) provides a ligand contact to 1-deoxy-D-xylulose 5-phosphate. Arginine 23 is a binding site for 3-amino-2-oxopropyl phosphate. Histidine 48 acts as the Proton acceptor in catalysis. Arginine 50 and histidine 55 together coordinate 1-deoxy-D-xylulose 5-phosphate. Glutamate 75 acts as the Proton acceptor in catalysis. Threonine 105 contacts 1-deoxy-D-xylulose 5-phosphate. The active-site Proton donor is histidine 196. Residues glycine 197 and 218-219 (GH) contribute to the 3-amino-2-oxopropyl phosphate site.

This sequence belongs to the PNP synthase family. Homooctamer; tetramer of dimers.

It is found in the cytoplasm. It carries out the reaction 3-amino-2-oxopropyl phosphate + 1-deoxy-D-xylulose 5-phosphate = pyridoxine 5'-phosphate + phosphate + 2 H2O + H(+). The protein operates within cofactor biosynthesis; pyridoxine 5'-phosphate biosynthesis; pyridoxine 5'-phosphate from D-erythrose 4-phosphate: step 5/5. Functionally, catalyzes the complicated ring closure reaction between the two acyclic compounds 1-deoxy-D-xylulose-5-phosphate (DXP) and 3-amino-2-oxopropyl phosphate (1-amino-acetone-3-phosphate or AAP) to form pyridoxine 5'-phosphate (PNP) and inorganic phosphate. The protein is Pyridoxine 5'-phosphate synthase of Pseudomonas savastanoi pv. phaseolicola (strain 1448A / Race 6) (Pseudomonas syringae pv. phaseolicola (strain 1448A / Race 6)).